A 643-amino-acid chain; its full sequence is Extracellular metalloproteinase 4 (643 aa).

An N-terminal signal peptide occupies residues Met-1–Ala-18. A propeptide spanning residues His-19 to Ala-254 is cleaved from the precursor. A compositionally biased stretch (basic and acidic residues) spans Thr-47–Asp-57. The disordered stretch occupies residues Thr-47 to Ser-71. Residues Phe-60 to Ser-71 show a composition bias toward polar residues. 2 N-linked (GlcNAc...) asparagine glycosylation sites follow: Asn-271 and Asn-420. His-437 is a binding site for Zn(2+). Glu-438 is an active-site residue. Position 441 (His-441) interacts with Zn(2+). A glycan (N-linked (GlcNAc...) asparagine) is linked at Asn-510.

It belongs to the peptidase M36 family. Zn(2+) is required as a cofactor.

It localises to the secreted. Secreted metalloproteinase probably acting as a virulence factor. The sequence is that of Extracellular metalloproteinase 4 (MEP4) from Trichophyton equinum (Horse ringworm fungus).